Reading from the N-terminus, the 24-residue chain is Brevinin-1Lb (24 aa).

A disulfide bridge links cysteine 18 with cysteine 24.

As to expression, expressed by the skin glands.

Its subcellular location is the secreted. Its function is as follows. Antibacterial activity against Gram-positive bacterium S.aureus and Gram-negative bacterium E.coli. The protein is Brevinin-1Lb of Rana luteiventris (Columbia spotted frog).